We begin with the raw amino-acid sequence, 134 residues long: Thyrotropin subunit beta (134 aa).

The first 16 residues, 1 to 16 (MSPFFMMSLLFGLTFG), serve as a signal peptide directing secretion. Cystine bridges form between cysteine 22–cysteine 72, cysteine 36–cysteine 87, cysteine 39–cysteine 125, cysteine 47–cysteine 103, cysteine 51–cysteine 105, and cysteine 108–cysteine 115. Residue asparagine 43 is glycosylated (N-linked (GlcNAc...) asparagine).

It belongs to the glycoprotein hormones subunit beta family. Heterodimer of a common alpha chain and a unique beta chain which confers biological specificity to thyrotropin, lutropin, follitropin and gonadotropin.

Its subcellular location is the secreted. Its function is as follows. Indispensable for the control of thyroid structure and metabolism. In Gallus gallus (Chicken), this protein is Thyrotropin subunit beta (TSHB).